We begin with the raw amino-acid sequence, 132 residues long: uncharacterized protein (132 aa).

The tract at residues 68-91 (WSRTSPNSSRSSPRSPASMASTSS) is disordered.

This is an uncharacterized protein from Streptomyces cacaoi.